A 190-amino-acid chain; its full sequence is Hypoxanthine/guanine phosphoribosyltransferase (190 aa).

It belongs to the purine/pyrimidine phosphoribosyltransferase family. Archaeal HPRT subfamily. In terms of assembly, homodimer.

The protein localises to the cytoplasm. The catalysed reaction is IMP + diphosphate = hypoxanthine + 5-phospho-alpha-D-ribose 1-diphosphate. It carries out the reaction GMP + diphosphate = guanine + 5-phospho-alpha-D-ribose 1-diphosphate. The protein operates within purine metabolism; IMP biosynthesis via salvage pathway; IMP from hypoxanthine: step 1/1. Its function is as follows. Catalyzes a salvage reaction resulting in the formation of IMP that is energically less costly than de novo synthesis. The protein is Hypoxanthine/guanine phosphoribosyltransferase of Methanosarcina barkeri (strain Fusaro / DSM 804).